Reading from the N-terminus, the 439-residue chain is MENQKNFLTTAPYKGTRDFYPEDMRLRNWMFSVMRETVLSFGYEEYDGPILESFDLYKAKSGEEIVERQLYDFIDKGERRVAIRPEMTPTLARMVAGNLRNLPKPVRWFSIPNLWRYEQPGKGRLREHWQLNVDLFGVDSHRAELEILLIADSILKKFGAPIGSYQIKVSHRKLLDSFLKNSLKLNGDQVHGVSKLLDKKSKISPEAFETEMKPFLNNFKEQFSLIETYLNSNLETVSKIPGIDTNSVSFIQNLFQELGELGIDKQLLFDPSIIRGFDYYTGCIFEVFDTNPENRRSLYGGGRYDNLIGLFSKEQLSGIGFGLGDVTLKNFLEGHNLIPNLSREKTIFLPIMDESLFVDTFKLSKELRENEILTETMLDSAKIGKQIQIAEKKGYRYVLFLGESEIRTETVQIKDLISGEQKSLPRKGLSDTLKKDFQL.

It belongs to the class-II aminoacyl-tRNA synthetase family. In terms of assembly, homodimer.

It localises to the cytoplasm. It catalyses the reaction tRNA(His) + L-histidine + ATP = L-histidyl-tRNA(His) + AMP + diphosphate + H(+). This chain is Histidine--tRNA ligase (hisS), found in Leptospira interrogans serogroup Icterohaemorrhagiae serovar Lai (strain 56601).